A 98-amino-acid chain; its full sequence is Large ribosomal subunit protein eL14 (98 aa).

Belongs to the eukaryotic ribosomal protein eL14 family.

This is Large ribosomal subunit protein eL14 from Hyperthermus butylicus (strain DSM 5456 / JCM 9403 / PLM1-5).